Here is a 304-residue protein sequence, read N- to C-terminus: Probable 5-dehydro-4-deoxyglucarate dehydratase (304 aa).

The protein belongs to the DapA family.

The enzyme catalyses 5-dehydro-4-deoxy-D-glucarate + H(+) = 2,5-dioxopentanoate + CO2 + H2O. It functions in the pathway carbohydrate acid metabolism; D-glucarate degradation; 2,5-dioxopentanoate from D-glucarate: step 2/2. This Rhodococcus jostii (strain RHA1) protein is Probable 5-dehydro-4-deoxyglucarate dehydratase.